The following is a 158-amino-acid chain: Cell number regulator 11 (158 aa).

Helical transmembrane passes span 49-67 and 78-94; these read FGDL…VTFG and TCCM…TIGW.

Belongs to the cornifelin family.

The protein localises to the membrane. The chain is Cell number regulator 11 (CNR11) from Zea mays (Maize).